Here is a 445-residue protein sequence, read N- to C-terminus: Inositol-pentakisphosphate 2-kinase IPK1 (445 aa).

ATP contacts are provided by residues 19-22 and R40; that span reads GAAN. R127 contacts substrate. Residues 144–146 and 162–164 contribute to the ATP site; these read SDH and EIK. An EXKPK motif motif is present at residues 162-166; the sequence is EIKAK. The substrate site is built by K166, K196, and N234. Residue R237 participates in ATP binding. 4 residues coordinate Zn(2+): H312, C322, C325, and H341. D363 is a binding site for substrate. Position 402 (D402) interacts with ATP. Substrate-binding residues include K406, K410, and Y414.

The protein belongs to the IPK1 type 2 family. Zn(2+) serves as cofactor.

The catalysed reaction is 1D-myo-inositol 1,3,4,5,6-pentakisphosphate + ATP = 1D-myo-inositol hexakisphosphate + ADP + H(+). Its function is as follows. Phosphorylates Ins(1,3,4,5,6)P5 at position 2 to form Ins(1,2,3,4,5,6)P6 (InsP6 or phytate). Phytate is a regulator of intracellular signaling, a highly abundant animal antinutrient, and a phosphate store in plant seeds. Also phosphorylates Ins(1,3,4,6)P4 and Ins(1,4,5,6)P4 to produce Ins(1,2,3,4,6)P5 and Ins(1,2,4,5,6)P5. In Oryza sativa subsp. indica (Rice), this protein is Inositol-pentakisphosphate 2-kinase IPK1.